The following is a 401-amino-acid chain: Chromatin modification-related protein EAF3 (401 aa).

The Tudor-knot domain maps to 13-98 (RCLAFHGPLM…DEWVGYDRIR (86 aa)). Positions 39-53 (TSIPNDKPGGSSQAT) are enriched in polar residues. Disordered stretches follow at residues 39–65 (TSIP…GEDE) and 117–210 (EAKK…NMLH). Composition is skewed to basic and acidic residues over residues 54 to 63 (KEIKPQKLGE) and 117 to 126 (EAKKSLLEQQ). A compositionally biased stretch (low complexity) spans 153–190 (SISKSTSQSFLTSSVSGRKSGRSSANSLHPGSSLRSSS). The residue at position 201 (Ser201) is a Phosphoserine. Residues 216–399 (PTPKISLQIP…TSSQYEGVAL (184 aa)) form the MRG domain.

The protein belongs to the MRG family. Component of the NuA4 histone acetyltransferase complex composed of at least ACT1, ARP4, YAF9, VID21, SWC4, EAF3, EAF5, EAF6, EAF7, EPL1, ESA1, TRA1 and YNG2.

It localises to the nucleus. In terms of biological role, component of the NuA4 histone acetyltransferase complex which is involved in transcriptional activation of selected genes principally by acetylation of nucleosomal histone H4 and H2A. The NuA4 complex is also involved in DNA repair. This Saccharomyces cerevisiae (strain ATCC 204508 / S288c) (Baker's yeast) protein is Chromatin modification-related protein EAF3 (EAF3).